The chain runs to 736 residues: Oxysterol-binding protein-related protein 9 (736 aa).

Ala-2 is modified (N-acetylalanine). In terms of domain architecture, PH spans 2 to 99 (ASIVEGPLSK…WIHALEETIL (98 aa)). The segment at 209-368 (LEPVISTMPS…RDDDGEAGSV (160 aa)) is disordered. The segment covering 253–274 (TPTPNSTGSGNSPPSSSLTPPS) has biased composition (low complexity). Phosphoserine is present on residues Ser-306, Ser-324, Ser-325, Ser-326, and Ser-329. 2 stretches are compositionally biased toward polar residues: residues 314 to 329 (SSGSASVLTHSSSGNS) and 336 to 348 (TESLNSSMSNGTS). Position 611 is a phosphoserine (Ser-611).

Belongs to the OSBP family. Heterodimer with OSBPL11. Interacts with OSBPL10.

It is found in the late endosome membrane. The protein localises to the golgi apparatus. The protein resides in the trans-Golgi network membrane. It carries out the reaction a 1,2-diacyl-sn-glycero-3-phospho-(1D-myo-inositol 4-phosphate)(out) + a 1,2-diacyl-sn-glycero-3-phospho-L-serine(in) = a 1,2-diacyl-sn-glycero-3-phospho-(1D-myo-inositol 4-phosphate)(in) + a 1,2-diacyl-sn-glycero-3-phospho-L-serine(out). Its function is as follows. Interacts with OSBPL11 to function as lipid transfer proteins. Together they form a heterodimer that localizes at the ER-trans-Golgi membrane contact sites, and exchanges phosphatidylserine (1,2-diacyl-sn-glycero-3-phospho-L-serine, PS) for phosphatidylinositol-4-phosphate (1,2-diacyl-sn-glycero-3-phospho-(1D-myo-inositol 4-phosphate), PI(4)P) between the two organelles, a step that is critical for sphingomyelin synthesis in the Golgi complex. The sequence is that of Oxysterol-binding protein-related protein 9 (Osbpl9) from Mus musculus (Mouse).